We begin with the raw amino-acid sequence, 747 residues long: ATPase family gene 2 protein homolog B (747 aa).

M1 is subject to N-acetylmethionine. Residues 234–241 (GPPGVGKT) and 500–507 (GPPGCAKT) contribute to the ATP site.

It belongs to the AAA ATPase family. AFG2 subfamily. As to quaternary structure, part of the 55LCC heterohexameric ATPase complex composed at least of AIRIM, AFG2A, AFG2B and CINP. Associates with pre-60S ribosomal particles. In terms of tissue distribution, expressed in neurons; also expressed at lower level in astrocytes, oligodendrocytes and microglia.

Its subcellular location is the cytoplasm. The protein localises to the cytoskeleton. It is found in the spindle. The protein resides in the nucleus. The catalysed reaction is ATP + H2O = ADP + phosphate + H(+). Its activity is regulated as follows. In the context of 55LCC heterohexameric ATPase complex, the ATPase activity is stimulated by DNA binding and inhibited in presence of RNA. Functionally, ATP-dependent chaperone part of the 55LCC heterohexameric ATPase complex which is chromatin-associated and promotes replisome proteostasis to maintain replication fork progression and genome stability. Required for replication fork progression, sister chromatid cohesion, and chromosome stability. The ATPase activity is specifically enhanced by replication fork DNA and is coupled to cysteine protease-dependent cleavage of replisome substrates in response to replication fork damage. Uses ATPase activity to process replisome substrates in S-phase, facilitating their proteolytic turnover from chromatin to ensure DNA replication and mitotic fidelity. Plays an essential role in the cytoplasmic maturation steps of pre-60S ribosomal particles by promoting the release of shuttling protein RSL24D1/RLP24 from the pre-ribosomal particles. The polypeptide is ATPase family gene 2 protein homolog B (Afg2b) (Rattus norvegicus (Rat)).